A 372-amino-acid chain; its full sequence is Cytochrome b (372 aa).

4 consecutive transmembrane segments (helical) span residues phenylalanine 25 to isoleucine 45, tryptophan 69 to isoleucine 90, tryptophan 105 to leucine 125, and phenylalanine 170 to isoleucine 190. Histidine 75 and histidine 89 together coordinate heme b. The heme b site is built by histidine 174 and histidine 188. Histidine 193 serves as a coordination point for a ubiquinone. A run of 4 helical transmembrane segments spans residues tyrosine 218 to serine 238, leucine 280 to histidine 300, methionine 312 to serine 332, and tyrosine 339 to proline 358.

This sequence belongs to the cytochrome b family. The cytochrome bc1 complex contains 3 respiratory subunits (MT-CYB, CYC1 and UQCRFS1), 2 core proteins (UQCRC1 and UQCRC2) and probably 6 low-molecular weight proteins. It depends on heme b as a cofactor.

It localises to the mitochondrion inner membrane. Component of the ubiquinol-cytochrome c reductase complex (complex III or cytochrome b-c1 complex) that is part of the mitochondrial respiratory chain. The b-c1 complex mediates electron transfer from ubiquinol to cytochrome c. Contributes to the generation of a proton gradient across the mitochondrial membrane that is then used for ATP synthesis. This Acrochordus granulatus (Rasp-skinned water snake) protein is Cytochrome b (MT-CYB).